An 89-amino-acid polypeptide reads, in one-letter code: Cell division topological specificity factor (89 aa).

It belongs to the MinE family.

Its function is as follows. Prevents the cell division inhibition by proteins MinC and MinD at internal division sites while permitting inhibition at polar sites. This ensures cell division at the proper site by restricting the formation of a division septum at the midpoint of the long axis of the cell. This chain is Cell division topological specificity factor, found in Legionella pneumophila (strain Paris).